We begin with the raw amino-acid sequence, 415 residues long: Phosphoribosylamine--glycine ligase (415 aa).

In terms of domain architecture, ATP-grasp spans 108–311 (KKIMEKYNIP…LMQHIIDLDE (204 aa)). Residue 134–191 (IENCELPVVVKKDGLAAGKGVIIADTIEAARSAIEIMYGDEEEGTVVFETFLEGEEFS) coordinates ATP. Residues Glu-281 and Asn-283 each coordinate Mg(2+).

Belongs to the GARS family. Mg(2+) serves as cofactor. Requires Mn(2+) as cofactor.

It carries out the reaction 5-phospho-beta-D-ribosylamine + glycine + ATP = N(1)-(5-phospho-beta-D-ribosyl)glycinamide + ADP + phosphate + H(+). The protein operates within purine metabolism; IMP biosynthesis via de novo pathway; N(1)-(5-phospho-D-ribosyl)glycinamide from 5-phospho-alpha-D-ribose 1-diphosphate: step 2/2. This chain is Phosphoribosylamine--glycine ligase, found in Staphylococcus aureus (strain MW2).